Consider the following 200-residue polypeptide: dITP/XTP pyrophosphatase (200 aa).

8-13 (TGNQGK) lines the substrate pocket. Catalysis depends on aspartate 69, which acts as the Proton acceptor. A Mg(2+)-binding site is contributed by aspartate 69. Substrate is bound by residues serine 70, 154 to 157 (FGYD), lysine 177, and 182 to 183 (HR).

Belongs to the HAM1 NTPase family. Homodimer. The cofactor is Mg(2+).

The catalysed reaction is XTP + H2O = XMP + diphosphate + H(+). The enzyme catalyses dITP + H2O = dIMP + diphosphate + H(+). It catalyses the reaction ITP + H2O = IMP + diphosphate + H(+). In terms of biological role, pyrophosphatase that catalyzes the hydrolysis of nucleoside triphosphates to their monophosphate derivatives, with a high preference for the non-canonical purine nucleotides XTP (xanthosine triphosphate), dITP (deoxyinosine triphosphate) and ITP. Seems to function as a house-cleaning enzyme that removes non-canonical purine nucleotides from the nucleotide pool, thus preventing their incorporation into DNA/RNA and avoiding chromosomal lesions. The sequence is that of dITP/XTP pyrophosphatase from Vibrio cholerae serotype O1 (strain ATCC 39315 / El Tor Inaba N16961).